A 377-amino-acid polypeptide reads, in one-letter code: Beta-lactamase (377 aa).

Positions 1 to 19 (MFKTTLCALLITASCSTFA) are cleaved as a signal peptide. The active-site Acyl-ester intermediate is the serine 80. The a beta-lactam site is built by serine 80, glutamine 136, tyrosine 166, asparagine 168, alanine 334, and asparagine 359.

The protein belongs to the class-C beta-lactamase family. Monomer.

Its subcellular location is the periplasm. It carries out the reaction a beta-lactam + H2O = a substituted beta-amino acid. Its activity is regulated as follows. Inhibited by the beta-lactamase-blocking agents avibactam, enmetazobactam, relebactam, nacubactam, vaborbactam, taniborbactam, zidebactam, and beta-lactam-analog boronic acids, via a covalent binding to Ser-80. Inhibited by non-beta-lactam, benzo(b)thiophene-2-boronic acid (BZBTH2B) and various cyclic boronates. Not inhibited by clavulanic acid. Inhibited by O-aryloxycarbonyl hydroxamates, via cross-linking of the active site Ser-80 to Lys-331. Weakly inhibited by citric acid. In terms of biological role, class C beta-lactamase which confers resistance to penicillins and cephalosporins. Has benzylpenicillin- and cephaloridine-hydrolyzing activity. Has weak cefuroxime, cefotaxime, cefoxitin and oxacillin-hydrolyzing activities. This chain is Beta-lactamase, found in Escherichia coli (strain K12).